Here is a 498-residue protein sequence, read N- to C-terminus: XK-related protein 4 (498 aa).

Positions 24–46 (SEHSGSVQGLHPGAQPDSAGAGD) are disordered. The next 2 helical transmembrane spans lie at 81 to 101 (CLWI…DVWL) and 111 to 131 (YWWF…VQLF). The interval 166-203 (SHGDVTAQHHPATPQRQASTASRNTTTNSTASTGLGPR) is disordered. Low complexity predominate over residues 183-198 (ASTASRNTTTNSTAST). Helical transmembrane passes span 302 to 322 (LFIY…LWYL) and 332 to 352 (FAVP…VFML).

It belongs to the XK family.

The protein localises to the cell membrane. The enzyme catalyses a 1,2-diacyl-sn-glycero-3-phospho-L-serine(in) = a 1,2-diacyl-sn-glycero-3-phospho-L-serine(out). Functionally, phospholipid scramblase that promotes phosphatidylserine exposure on apoptotic cell surface. Phosphatidylserine is a specific marker only present at the surface of apoptotic cells and acts as a specific signal for engulfment. In Tetraodon nigroviridis (Spotted green pufferfish), this protein is XK-related protein 4.